We begin with the raw amino-acid sequence, 93 residues long: U11-ctenitoxin-Pn1a (93 aa).

The first 21 residues, 1–21 (MKCAVLFLSVIALVHIFVVEA), serve as a signal peptide directing secretion. The propeptide occupies 22 to 34 (EEEPDSDALVPQE). Cystine bridges form between Cys37-Cys51, Cys44-Cys57, Cys50-Cys75, Cys59-Cys73, and Cys83-Cys90.

The protein belongs to the neurotoxin 09 (Tx3-6) family. As to expression, expressed by the venom gland.

The protein localises to the secreted. Functionally, probable neurotoxin. In Phoneutria nigriventer (Brazilian armed spider), this protein is U11-ctenitoxin-Pn1a.